The following is a 243-amino-acid chain: Carboxy-S-adenosyl-L-methionine synthase (243 aa).

Residues Y40, 65–67 (GCS), 90–91 (DN), 118–119 (DI), N133, and R200 each bind S-adenosyl-L-methionine.

Belongs to the class I-like SAM-binding methyltransferase superfamily. Cx-SAM synthase family. In terms of assembly, homodimer.

The enzyme catalyses prephenate + S-adenosyl-L-methionine = carboxy-S-adenosyl-L-methionine + 3-phenylpyruvate + H2O. Functionally, catalyzes the conversion of S-adenosyl-L-methionine (SAM) to carboxy-S-adenosyl-L-methionine (Cx-SAM). In Shewanella baltica (strain OS155 / ATCC BAA-1091), this protein is Carboxy-S-adenosyl-L-methionine synthase.